The sequence spans 392 residues: Metacaspase-1 (392 aa).

A compositionally biased stretch (polar residues) spans 1-14 (MYPGSGNYSYNNRP). The segment at 1-87 (MYPGSGNYSY…PSSIQQGNGQ (87 aa)) is disordered. A compositionally biased stretch (low complexity) spans 41–51 (QQQQYQDQYQG). Polar residues predominate over residues 53–63 (NRGQYQGQYQD). Active-site residues include H182 and C238.

Belongs to the peptidase C14B family.

Involved in cell death (apoptosis). In Candida glabrata (strain ATCC 2001 / BCRC 20586 / JCM 3761 / NBRC 0622 / NRRL Y-65 / CBS 138) (Yeast), this protein is Metacaspase-1 (MCA1).